We begin with the raw amino-acid sequence, 644 residues long: Exoribonuclease 2 (644 aa).

Residues 189–516 (RQDLTALNFV…NHRLLKAVIK (328 aa)) enclose the RNB domain. One can recognise an S1 motif domain in the interval 561–643 (NTRFAAEIID…ETRSIIARPA (83 aa)).

The protein belongs to the RNR ribonuclease family. RNase II subfamily.

Its subcellular location is the cytoplasm. The enzyme catalyses Exonucleolytic cleavage in the 3'- to 5'-direction to yield nucleoside 5'-phosphates.. Its function is as follows. Involved in mRNA degradation. Hydrolyzes single-stranded polyribonucleotides processively in the 3' to 5' direction. The protein is Exoribonuclease 2 of Salmonella paratyphi A (strain ATCC 9150 / SARB42).